Consider the following 503-residue polypeptide: ATP synthase subunit alpha (503 aa).

169 to 176 contacts ATP; it reads GDRGTGKT.

This sequence belongs to the ATPase alpha/beta chains family. F-type ATPases have 2 components, CF(1) - the catalytic core - and CF(0) - the membrane proton channel. CF(1) has five subunits: alpha(3), beta(3), gamma(1), delta(1), epsilon(1). CF(0) has three main subunits: a(1), b(2) and c(9-12). The alpha and beta chains form an alternating ring which encloses part of the gamma chain. CF(1) is attached to CF(0) by a central stalk formed by the gamma and epsilon chains, while a peripheral stalk is formed by the delta and b chains.

It localises to the cell inner membrane. The catalysed reaction is ATP + H2O + 4 H(+)(in) = ADP + phosphate + 5 H(+)(out). Produces ATP from ADP in the presence of a proton gradient across the membrane. The alpha chain is a regulatory subunit. The polypeptide is ATP synthase subunit alpha (Leptospira interrogans serogroup Icterohaemorrhagiae serovar copenhageni (strain Fiocruz L1-130)).